The following is a 476-amino-acid chain: Serine carboxypeptidase 2 (476 aa).

The first 34 residues, 1-34 (MRTTTRRLPPAPAAAAVLLAALTCLLLRPAAVAA), serve as a signal peptide directing secretion. 3 cysteine pairs are disulfide-bonded: Cys-97/Cys-353, Cys-254/Cys-266, and Cys-290/Cys-320. Asn-148 and Asn-159 each carry an N-linked (GlcNAc...) asparagine glycan. Residue Ser-190 is part of the active site. N-linked (GlcNAc...) asparagine glycosylation occurs at Asn-291. The propeptide at 295-313 (SSSSSSLSRRRTRGRYPWL) is linker peptide. Position 314 is a blocked amino end (Thr) (Thr-314). Residues Asn-341 and Asn-347 are each glycosylated (N-linked (GlcNAc...) asparagine). N-linked (GlcNAc...) asparagine; partial glycosylation is present at Asn-352. An O-linked (GalNAc...) threonine; in variant 351-AT-352 glycan is attached at Asn-352. Residues Asp-390 and His-443 contribute to the active site. N-linked (GlcNAc...) asparagine glycosylation occurs at Asn-472.

The protein belongs to the peptidase S10 family. As to quaternary structure, carboxypeptidase II is a dimer, where each monomer is composed of two chains linked by a disulfide bond.

It is found in the secreted. It carries out the reaction Preferential release of a C-terminal arginine or lysine residue.. May be involved in the degradation of small peptides (2-5 residues) or in the degradation of storage proteins in the embryo. This Hordeum vulgare (Barley) protein is Serine carboxypeptidase 2 (CBP2).